The primary structure comprises 500 residues: ATP synthase subunit alpha (500 aa).

ATP is bound at residue 168 to 175 (GDRQTGKT).

Belongs to the ATPase alpha/beta chains family. As to quaternary structure, F-type ATPases have 2 components, CF(1) - the catalytic core - and CF(0) - the membrane proton channel. CF(1) has five subunits: alpha(3), beta(3), gamma(1), delta(1), epsilon(1). CF(0) has three main subunits: a(1), b(2) and c(9-12). The alpha and beta chains form an alternating ring which encloses part of the gamma chain. CF(1) is attached to CF(0) by a central stalk formed by the gamma and epsilon chains, while a peripheral stalk is formed by the delta and b chains.

Its subcellular location is the cell membrane. It carries out the reaction ATP + H2O + 4 H(+)(in) = ADP + phosphate + 5 H(+)(out). In terms of biological role, produces ATP from ADP in the presence of a proton gradient across the membrane. The alpha chain is a regulatory subunit. The sequence is that of ATP synthase subunit alpha from Streptococcus suis (strain 98HAH33).